The chain runs to 253 residues: Triosephosphate isomerase (253 aa).

9 to 11 (NWK) provides a ligand contact to substrate. His95 serves as the catalytic Electrophile. Glu167 acts as the Proton acceptor in catalysis. Substrate contacts are provided by residues Gly173, Ser213, and 234-235 (GG). Phosphoserine is present on Ser213.

This sequence belongs to the triosephosphate isomerase family. In terms of assembly, homodimer.

It localises to the cytoplasm. It catalyses the reaction D-glyceraldehyde 3-phosphate = dihydroxyacetone phosphate. It participates in carbohydrate biosynthesis; gluconeogenesis. The protein operates within carbohydrate degradation; glycolysis; D-glyceraldehyde 3-phosphate from glycerone phosphate: step 1/1. Its function is as follows. Involved in the gluconeogenesis. Catalyzes stereospecifically the conversion of dihydroxyacetone phosphate (DHAP) to D-glyceraldehyde-3-phosphate (G3P). This Geobacillus kaustophilus (strain HTA426) protein is Triosephosphate isomerase.